A 310-amino-acid chain; its full sequence is Putative HTH-type transcriptional regulatory protein M1425_1284 (310 aa).

Residues 125 to 180 enclose the HTH cro/C1-type domain; it reads LKHKREEMGYSIGDVAKFLGVSRKAIYDYEKGDSDVSLEVAEKLIDLFGDDIIGDV. Residues 136 to 155 constitute a DNA-binding region (H-T-H motif); it reads IGDVAKFLGVSRKAIYDYEK.

In Saccharolobus islandicus (strain M.14.25 / Kamchatka #1) (Sulfolobus islandicus), this protein is Putative HTH-type transcriptional regulatory protein M1425_1284.